A 472-amino-acid polypeptide reads, in one-letter code: Proline--tRNA ligase (472 aa).

Belongs to the class-II aminoacyl-tRNA synthetase family. ProS type 3 subfamily. Homodimer.

Its subcellular location is the cytoplasm. It carries out the reaction tRNA(Pro) + L-proline + ATP = L-prolyl-tRNA(Pro) + AMP + diphosphate. Functionally, catalyzes the attachment of proline to tRNA(Pro) in a two-step reaction: proline is first activated by ATP to form Pro-AMP and then transferred to the acceptor end of tRNA(Pro). This chain is Proline--tRNA ligase, found in Ureaplasma urealyticum serovar 10 (strain ATCC 33699 / Western).